Here is a 263-residue protein sequence, read N- to C-terminus: Large ribosomal subunit protein uL10m (263 aa).

A mitochondrion-targeting transit peptide spans 1 to 29; that stretch reads MPFSVEVEVFFLLVEDKLGWLPTLQPVRH. Residues 241 to 263 form a disordered region; that stretch reads QHEGDCATSTEGKPHPPDPAPDS.

This sequence belongs to the universal ribosomal protein uL10 family. Component of the mitochondrial ribosome large subunit (39S) which comprises a 16S rRNA and about 50 distinct proteins.

The protein localises to the mitochondrion. The protein is Large ribosomal subunit protein uL10m (Mrpl10) of Rattus norvegicus (Rat).